Here is a 118-residue protein sequence, read N- to C-terminus: Acidic phospholipase A2 PA-3 (118 aa).

7 disulfides stabilise this stretch: Cys11-Cys71, Cys27-Cys117, Cys29-Cys45, Cys44-Cys98, Cys51-Cys91, Cys60-Cys84, and Cys78-Cys89. Ca(2+)-binding residues include Tyr28, Gly30, and Gly32. Residue His48 is part of the active site. Residue Asp49 coordinates Ca(2+). The active site involves Asp92.

Belongs to the phospholipase A2 family. Group I subfamily. D49 sub-subfamily. It depends on Ca(2+) as a cofactor. As to expression, expressed by the venom gland.

It is found in the secreted. The catalysed reaction is a 1,2-diacyl-sn-glycero-3-phosphocholine + H2O = a 1-acyl-sn-glycero-3-phosphocholine + a fatty acid + H(+). PLA2 catalyzes the calcium-dependent hydrolysis of the 2-acyl groups in 3-sn-phosphoglycerides. This chain is Acidic phospholipase A2 PA-3, found in Pseudechis australis (Mulga snake).